The primary structure comprises 261 residues: MDLQGRAVPSVDRLRVLLMLFHTMAQIMAEQEVENLSGLSTNPEKDIFVVRENGTTCLMAEFAAKFIVPYDVWASNYVDLITEQADIALTRGAEVGRCGHSESELQVFWVDRAYALKMLFVKESHNMSKGPEETWRLSKVQFVYDSSEKTHFKDAVSAGKHTANSHHLSALVTPAGKSYECQAQQTISLASSDPQKTVTMILSAVHIQPFDIISDFVFSEEHKCAVDEREQLEETLPLILGLILGLVIVVTLAIYHVHPQK.

The N-terminal stretch at 1 to 29 (MDLQGRAVPSVDRLRVLLMLFHTMAQIMA) is a signal peptide. Over 30 to 234 (EQEVENLSGL…AVDEREQLEE (205 aa)) the chain is Extracellular. 3 N-linked (GlcNAc...) asparagine glycosylation sites follow: Asn-35, Asn-53, and Asn-126. Residues 235–255 (TLPLILGLILGLVIVVTLAIY) traverse the membrane as a helical segment. Residues 256-261 (HVHPQK) are Cytoplasmic-facing.

It belongs to the LAMP family. In terms of processing, glycosylated.

The protein localises to the cytoplasmic vesicle membrane. It is found in the cell membrane. The protein resides in the cell projection. It localises to the dendrite. Its subcellular location is the cytoplasmic vesicle. The protein localises to the secretory vesicle. It is found in the synaptic vesicle membrane. The protein resides in the growth cone membrane. It localises to the early endosome membrane. Its subcellular location is the recycling endosome. The protein localises to the endoplasmic reticulum-Golgi intermediate compartment membrane. It is found in the endosome membrane. Its function is as follows. Plays a role in short-term synaptic plasticity in a subset of GABAergic neurons in the brain. This is Lysosome-associated membrane glycoprotein 5 (LAMP5) from Pongo abelii (Sumatran orangutan).